A 183-amino-acid chain; its full sequence is uncharacterized protein (183 aa).

Residues M1–A36 form a disordered region. In terms of domain architecture, RRM spans T100–N174.

The protein localises to the nucleus. Its subcellular location is the nucleolus. This is an uncharacterized protein from Schizosaccharomyces pombe (strain 972 / ATCC 24843) (Fission yeast).